Consider the following 1487-residue polypeptide: Collagen alpha-1(II) chain (1487 aa).

The signal sequence occupies residues 1–25 (MIRLGAPQSLVLLTLLIAAVLRCQG). The propeptide at 26–181 (QDAQEAGSCL…PGLSAGNFAA (156 aa)) is N-terminal propeptide. The VWFC domain occupies 32 to 89 (GSCLQNGQRYKDKDVWKPSSCRICVCDTGNVLCDDIICEDPDCLNPEIPFGECCPICP). The disordered stretch occupies residues 96–179 (SGKLGPKGQK…GPPGLSAGNF (84 aa)). Composition is skewed to basic and acidic residues over residues 104 to 115 (QKGEPGDIRDII) and 132 to 153 (PRGD…RDGE). Over residues 157–172 (PGNPGPAGPPGPPGPP) the composition is skewed to pro residues. Lys-190 bears the 5-hydroxylysine mark. The O-linked (Gal...) hydroxylysine glycan is linked to Lys-190. Residues 191–1237 (AGGAQMGVMQ…QREKGPDPMQ (1047 aa)) form a disordered region. The segment covering 192-203 (GGAQMGVMQGPM) has biased composition (low complexity). Residues 201–1214 (GPMGPMGPRG…PGPPGPPGPP (1014 aa)) form a triple-helical region region. Residues 208-217 (PRGPPGPAGA) are compositionally biased toward pro residues. Residues 218–239 (PGPQGFQGNPGEPGEPGVSGPM) show a composition bias toward low complexity. Basic and acidic residues predominate over residues 251 to 265 (PGDDGEAGKPGKSGE). Residues Lys-287, Lys-299, and Lys-308 each carry the 5-hydroxylysine modification. Residues Lys-287, Lys-299, and Lys-308 are each glycosylated (O-linked (Gal...) hydroxylysine). Low complexity-rich tracts occupy residues 310–320 (ESGSPGENGSP) and 335–350 (TGPA…DGQP). A compositionally biased stretch (gly residues) spans 360-369 (GPAGGPGFPG). Composition is skewed to low complexity over residues 370 to 382 (APGA…PTGA) and 403 to 431 (PAGA…AGAP). Lys-374 is subject to 5-hydroxylysine. A glycan (O-linked (Gal...) hydroxylysine) is linked at Lys-374. The segment covering 433-442 (FPGPRGPPGP) has biased composition (pro residues). Residues 472–485 (ETGPAGPQGAPGPA) show a composition bias toward low complexity. 5-hydroxylysine is present on residues Lys-608 and Lys-620. Lys-608 and Lys-620 each carry an O-linked (Gal...) hydroxylysine glycan. Low complexity predominate over residues 622 to 631 (LAGAPGLRGL). 2 positions are modified to 4-hydroxyproline: Pro-659 and Pro-668. Pro-670 carries the post-translational modification 3-hydroxyproline. 2 positions are modified to 4-hydroxyproline: Pro-671 and Pro-674. Low complexity predominate over residues 706–736 (ERGSPGAQGLQGPRGLPGTPGTDGPKGAAGP). Basic and acidic residues predominate over residues 764–775 (KGDRGDVGEKGP). Composition is skewed to low complexity over residues 833 to 848 (AGFA…PGAK) and 877 to 914 (PTGV…NGNP). Pro-907 is modified (3-hydroxyproline). 4-hydroxyproline occurs at positions 908, 914, and 920. A compositionally biased stretch (low complexity) spans 962–980 (DGPSGLDGPPGPQGLAGQR). Residues 1069–1079 (APGPPGSPGPA) show a composition bias toward pro residues. A compositionally biased stretch (basic and acidic residues) spans 1115 to 1129 (RGDKGESGEQGERGL). At Pro-1144 the chain carries 3-hydroxyproline. 2 stretches are compositionally biased toward low complexity: residues 1148-1157 (SGDQGASGPA) and 1171-1181 (PSGKDGSNGIP). At Pro-1181 the chain carries 4-hydroxyproline. 3-hydroxyproline is present on Pro-1186. Pro-1187 carries the 4-hydroxyproline modification. Positions 1199-1216 (VGPPGSPGPPGPPGPPGP) are enriched in pro residues. Position 1201 is a 3-hydroxyproline (Pro-1201). 2 positions are modified to 4-hydroxyproline: Pro-1202 and Pro-1205. At Pro-1207 the chain carries 3-hydroxyproline. 4-hydroxyproline is present on residues Pro-1208 and Pro-1211. Residue Pro-1213 is modified to 3-hydroxyproline. Pro-1214 carries the post-translational modification 4-hydroxyproline. Residues 1215-1241 (GPGIDMSAFAGLGQREKGPDPMQYMRA) are nonhelical region (C-terminal). The Fibrillar collagen NC1 domain maps to 1253 to 1487 (VEVDATLKSL…GVDIGPVCFL (235 aa)). 3 disulfide bridges follow: Cys-1283-Cys-1315, Cys-1323-Cys-1485, and Cys-1393-Cys-1438. Ca(2+) contacts are provided by Asp-1301, Asn-1303, Gln-1304, Cys-1306, and Asp-1309.

It belongs to the fibrillar collagen family. In terms of assembly, homotrimers of alpha 1(II) chains. In terms of processing, contains mostly 4-hydroxyproline. Prolines at the third position of the tripeptide repeating unit (G-X-P) are 4-hydroxylated in some or all of the chains. Contains 3-hydroxyproline at a few sites. This modification occurs on the first proline residue in the sequence motif Gly-Pro-Hyp, where Hyp is 4-hydroxyproline. Post-translationally, lysine residues at the third position of the tripeptide repeating unit (G-X-Y) are 5-hydroxylated in some or all of the chains. In terms of processing, O-glycosylated on hydroxylated lysine residues. The O-linked glycan consists of a Glc-Gal disaccharide.

It is found in the secreted. The protein localises to the extracellular space. The protein resides in the extracellular matrix. Its function is as follows. Type II collagen is specific for cartilaginous tissues. It is essential for the normal embryonic development of the skeleton, for linear growth and for the ability of cartilage to resist compressive forces. This is Collagen alpha-1(II) chain from Mus musculus (Mouse).